The sequence spans 397 residues: Elongation factor Tu (397 aa).

The tr-type G domain maps to 10-206 (KPHVNIGTIG…AVDTSIPQPE (197 aa)). The tract at residues 19 to 26 (GHIDHGKT) is G1. GTP is bound at residue 19-26 (GHIDHGKT). Residue T26 participates in Mg(2+) binding. Positions 62–66 (GITIS) are G2. A G3 region spans residues 83-86 (DCPG). Residues 83-87 (DCPGH) and 138-141 (NKSD) each bind GTP. Residues 138–141 (NKSD) form a G4 region. The tract at residues 176–178 (SAL) is G5.

This sequence belongs to the TRAFAC class translation factor GTPase superfamily. Classic translation factor GTPase family. EF-Tu/EF-1A subfamily. As to quaternary structure, monomer.

Its subcellular location is the cytoplasm. It catalyses the reaction GTP + H2O = GDP + phosphate + H(+). GTP hydrolase that promotes the GTP-dependent binding of aminoacyl-tRNA to the A-site of ribosomes during protein biosynthesis. The polypeptide is Elongation factor Tu (Salinispora tropica (strain ATCC BAA-916 / DSM 44818 / JCM 13857 / NBRC 105044 / CNB-440)).